The primary structure comprises 469 residues: Properdin (469 aa).

The first 27 residues, 1-27 (MITEGAQAPRLLLPPLLLLLTLPATGS), serve as a signal peptide directing secretion. 7 consecutive TSP type-1 domains span residues 28–76 (DPVL…QPCR), 77–134 (SPRW…QCCP), 136–191 (MGGW…QVCP), 193–255 (HGAW…PPCP), 257–313 (AGGW…VPCP), 315–377 (DGEW…QHCP), and 379–462 (KGSW…PACK). 3 disulfide bridges follow: cysteine 32/cysteine 56, cysteine 43/cysteine 72, and cysteine 57/cysteine 75. Residues tryptophan 83 and tryptophan 86 are each glycosylated (C-linked (Man) tryptophan). Intrachain disulfides connect cysteine 89-cysteine 127, cysteine 93-cysteine 133, cysteine 104-cysteine 111, cysteine 132-cysteine 170, cysteine 148-cysteine 184, cysteine 152-cysteine 190, and cysteine 163-cysteine 174. An O-linked (Fuc...) threonine glycan is attached at threonine 92. 3 C-linked (Man) tryptophan glycosylation sites follow: tryptophan 139, tryptophan 142, and tryptophan 145. O-linked (Fuc...) threonine glycosylation is present at threonine 151. 3 C-linked (Man) tryptophan glycosylation sites follow: tryptophan 196, tryptophan 199, and tryptophan 202. 3 cysteine pairs are disulfide-bonded: cysteine 205–cysteine 248, cysteine 209–cysteine 254, and cysteine 224–cysteine 238. O-linked (Fuc...) serine glycosylation is present at serine 208. The interval 219–238 (TRSRKCSAPEPSQKPPGKPC) is disordered. C-linked (Man) tryptophan glycosylation is found at tryptophan 260 and tryptophan 263. 3 disulfides stabilise this stretch: cysteine 269-cysteine 306, cysteine 273-cysteine 312, and cysteine 284-cysteine 296. Threonine 272 carries O-linked (Fuc...) threonine glycosylation. C-linked (Man) tryptophan glycosylation is found at tryptophan 321 and tryptophan 324. 3 disulfides stabilise this stretch: cysteine 327–cysteine 370, cysteine 337–cysteine 376, and cysteine 350–cysteine 360. The interaction with Complement C3 beta chain stretch occupies residues 351 to 359 (RGRKFDGHR). Residues tryptophan 382, tryptophan 385, and tryptophan 388 are each glycosylated (C-linked (Man) tryptophan). 3 disulfides stabilise this stretch: cysteine 391–cysteine 455, cysteine 395–cysteine 461, and cysteine 407–cysteine 439. N-linked (GlcNAc...) (complex) asparagine glycosylation occurs at asparagine 428.

As to quaternary structure, in plasma, properdin exists as dimers, trimers or tetramers in the relative proportions of 26:54:20. Interacts with the pro-C3-convertase enzyme complex (C3b-Bb) comprised of Complement C3 beta chain (C3b) and the Complement factor B Bb fragment (Bb), where it binds (via its TSP type-1 5 domain) with C3b and Bb. This interaction stabilizes the complex and allows it to become the active C3-convertase enzyme complex (C3b-Bb-FP). Interacts with C3b. Interacts with CFB.

It is found in the secreted. In terms of biological role, a positive regulator of the alternate pathway (AP) of complement. It binds to and stabilizes the C3- and C5-convertase enzyme complexes. Inhibits CFI-CFH mediated degradation of Complement C3 beta chain (C3b). This is Properdin from Homo sapiens (Human).